A 155-amino-acid chain; its full sequence is Transcriptional repressor NrdR (155 aa).

A compositionally biased stretch (polar residues) spans 1-11; it reads MECPNCHQNAS. The interval 1–22 is disordered; sequence MECPNCHQNASRVIDSRPSDEN. A zinc finger spans residues 3–34; sequence CPNCHQNASRVIDSRPSDENRAIRRRRECENC. An ATP-cone domain is found at 49–139; the sequence is LLVVKNDGTR…IYREFKDMSS (91 aa).

This sequence belongs to the NrdR family. Zn(2+) is required as a cofactor.

In terms of biological role, negatively regulates transcription of bacterial ribonucleotide reductase nrd genes and operons by binding to NrdR-boxes. In Lactobacillus acidophilus (strain ATCC 700396 / NCK56 / N2 / NCFM), this protein is Transcriptional repressor NrdR.